A 297-amino-acid polypeptide reads, in one-letter code: tRNA dimethylallyltransferase (297 aa).

9 to 16 is a binding site for ATP; the sequence is GPTASGKS. Residue 11-16 coordinates substrate; that stretch reads TASGKS. Interaction with substrate tRNA regions lie at residues 34-37 and 155-159; these read DSMQ and QRVIR.

This sequence belongs to the IPP transferase family. As to quaternary structure, monomer. The cofactor is Mg(2+).

It catalyses the reaction adenosine(37) in tRNA + dimethylallyl diphosphate = N(6)-dimethylallyladenosine(37) in tRNA + diphosphate. Its function is as follows. Catalyzes the transfer of a dimethylallyl group onto the adenine at position 37 in tRNAs that read codons beginning with uridine, leading to the formation of N6-(dimethylallyl)adenosine (i(6)A). This Leuconostoc mesenteroides subsp. mesenteroides (strain ATCC 8293 / DSM 20343 / BCRC 11652 / CCM 1803 / JCM 6124 / NCDO 523 / NBRC 100496 / NCIMB 8023 / NCTC 12954 / NRRL B-1118 / 37Y) protein is tRNA dimethylallyltransferase.